A 264-amino-acid polypeptide reads, in one-letter code: S-adenosylmethionine decarboxylase proenzyme (264 aa).

The active-site Schiff-base intermediate with substrate; via pyruvic acid is S112. S112 bears the Pyruvic acid (Ser); by autocatalysis mark. Catalysis depends on H117, which acts as the Proton acceptor; for processing activity. C140 (proton donor; for catalytic activity) is an active-site residue.

This sequence belongs to the prokaryotic AdoMetDC family. Type 2 subfamily. In terms of assembly, heterooctamer of four alpha and four beta chains arranged as a tetramer of alpha/beta heterodimers. Pyruvate serves as cofactor. Post-translationally, is synthesized initially as an inactive proenzyme. Formation of the active enzyme involves a self-maturation process in which the active site pyruvoyl group is generated from an internal serine residue via an autocatalytic post-translational modification. Two non-identical subunits are generated from the proenzyme in this reaction, and the pyruvate is formed at the N-terminus of the alpha chain, which is derived from the carboxyl end of the proenzyme. The post-translation cleavage follows an unusual pathway, termed non-hydrolytic serinolysis, in which the side chain hydroxyl group of the serine supplies its oxygen atom to form the C-terminus of the beta chain, while the remainder of the serine residue undergoes an oxidative deamination to produce ammonia and the pyruvoyl group blocking the N-terminus of the alpha chain.

The catalysed reaction is S-adenosyl-L-methionine + H(+) = S-adenosyl 3-(methylsulfanyl)propylamine + CO2. It functions in the pathway amine and polyamine biosynthesis; S-adenosylmethioninamine biosynthesis; S-adenosylmethioninamine from S-adenosyl-L-methionine: step 1/1. Its function is as follows. Catalyzes the decarboxylation of S-adenosylmethionine to S-adenosylmethioninamine (dcAdoMet), the propylamine donor required for the synthesis of the polyamines spermine and spermidine from the diamine putrescine. The chain is S-adenosylmethionine decarboxylase proenzyme from Yersinia pseudotuberculosis serotype O:1b (strain IP 31758).